Reading from the N-terminus, the 261-residue chain is Small ribosomal subunit protein mS23 (261 aa).

The tract at residues 233 to 261 (RASSPSASWTNETEEEQKPIDQDVEEIQL) is disordered.

Belongs to the mitochondrion-specific ribosomal protein mS23 family. Component of the mitochondrial small ribosomal subunit.

Its subcellular location is the mitochondrion. This chain is Small ribosomal subunit protein mS23 (RSM25), found in Kluyveromyces lactis (strain ATCC 8585 / CBS 2359 / DSM 70799 / NBRC 1267 / NRRL Y-1140 / WM37) (Yeast).